A 376-amino-acid polypeptide reads, in one-letter code: Putative 12-oxophytodienoate reductase 13 (376 aa).

Residues 25 to 27, alanine 58, and glutamine 99 contribute to the FMN site; that span reads PLT. Position 165–168 (165–168) interacts with substrate; that stretch reads HGAH. FMN-binding positions include arginine 217, glycine 301, and 322–323; that span reads GR.

This sequence belongs to the NADH:flavin oxidoreductase/NADH oxidase family. It depends on FMN as a cofactor.

Functionally, putative oxophytodienoate reductase that may be involved in the biosynthesis or metabolism of oxylipin signaling molecules. This is Putative 12-oxophytodienoate reductase 13 (OPR13) from Oryza sativa subsp. japonica (Rice).